The sequence spans 496 residues: MSAPVLTTSSGSPIDNNLNSMTAGVNGPILIQDFTLIDKLAHFDRERIPERVVHAKGAGAHGYFEVPSSDVPKWCKAKFLNKVGKRTPIFTRFSTVGGEKGSSDSERDPRGFAVKFYTEEGNFDMVGNNTPVFFIRDPSKFPDFIHTQKRNPQTNCKDPNMFWDFLGQTPESTHQVSILFSDRGTPKSYRHMHGFSSHTLKFVNAQGKPYWVKLHFTSETGIQNYTAEEAAKMSMNDPDSATRDLFETIAKGGEPAWKVSIQLMEFEDALKYRFNPFDVTKIWSHKDYPLIQIGRMVLNRNPENYFAEVEQAAFSPSHMVPGIEPSPDKMLQGRLFSYPDTHRHRLGVNYQQIPVNCPFAVKGGVKNYQRDGFMAVNGNGGKGPNYQPNSFGGPEPHPEFAQHKFDVSGFAARQPYNHPNDDFVQPGDLYRLMSEDAKSRFVSNLVGHMSGVTIKEIQVRAVSNFYKADKDLGARLCKGLGIDVNDVIKFAARSNL.

Residues His-54 and Asn-128 contribute to the active site. Residue Tyr-338 coordinates heme. The Microbody targeting signal signature appears at Ser-494–Leu-496.

Belongs to the catalase family. It depends on heme as a cofactor.

It is found in the peroxisome matrix. The catalysed reaction is 2 H2O2 = O2 + 2 H2O. In terms of biological role, catalyzes the degradation of hydrogen peroxide (H(2)O(2)) generated by peroxisomal oxidases to water and oxygen, thereby protecting cells from the toxic effects of hydrogen peroxide. The protein is Catalase-A (catA) of Dictyostelium discoideum (Social amoeba).